We begin with the raw amino-acid sequence, 902 residues long: Cytosolic 10-formyltetrahydrofolate dehydrogenase (902 aa).

The tract at residues 1–310 (MKIAVIGQSL…LASNFFKGAA (310 aa)) is hydrolase domain. Ser-9 carries the post-translational modification Phosphoserine. Position 38 is an N6-succinyllysine (Lys-38). 88-90 (QFI) contributes to the (6R)-10-formyltetrahydrofolate binding site. The Proton donor role is filled by His-106. Asp-142 provides a ligand contact to (6R)-10-formyltetrahydrofolate. In terms of domain architecture, Carrier spans 318-395 (EAELVTAEAV…DFIQLLVRKL (78 aa)). Ser-354 carries the post-translational modification O-(pantetheine 4'-phosphoryl)serine. The segment at 417–902 (TIRIPHQLFI…LRVKTVTFEY (486 aa)) is aldehyde dehydrogenase domain. NADP(+) is bound by residues 571-573 (IPW) and 597-600 (KPAQ). A phosphoserine mark is found at Ser-629 and Ser-631. NADP(+)-binding positions include 630-635 (GSLVGQ) and 650-651 (GS). Lys-660 is modified (N6-succinyllysine). Glu-673 (proton acceptor) is an active-site residue. 673-674 (EL) contributes to the NADP(+) binding site. The active-site Proton donor is the Cys-707. Lys-757 is a binding site for NADP(+). Lys-767 carries the post-translational modification N6-succinyllysine. 804–806 (ESF) contacts NADP(+). A Phosphoserine modification is found at Ser-825. At Lys-882 the chain carries N6-acetyllysine.

In the N-terminal section; belongs to the GART family. This sequence in the C-terminal section; belongs to the aldehyde dehydrogenase family. ALDH1L subfamily. In terms of assembly, homotetramer. In terms of processing, phosphopantetheinylation at Ser-354 by AASDHPPT is required for the formyltetrahydrofolate dehydrogenase activity.

It is found in the cytoplasm. The protein resides in the cytosol. It carries out the reaction (6R)-10-formyltetrahydrofolate + NADP(+) + H2O = (6S)-5,6,7,8-tetrahydrofolate + CO2 + NADPH + H(+). In terms of biological role, cytosolic 10-formyltetrahydrofolate dehydrogenase that catalyzes the NADP(+)-dependent conversion of 10-formyltetrahydrofolate to tetrahydrofolate and carbon dioxide. May also have an NADP(+)-dependent aldehyde dehydrogenase activity towards formaldehyde, acetaldehyde, propionaldehyde, and benzaldehyde. The protein is Cytosolic 10-formyltetrahydrofolate dehydrogenase of Pongo abelii (Sumatran orangutan).